A 598-amino-acid polypeptide reads, in one-letter code: Proline--tRNA ligase (598 aa).

This sequence belongs to the class-II aminoacyl-tRNA synthetase family. ProS type 1 subfamily. As to quaternary structure, homodimer.

It localises to the cytoplasm. The enzyme catalyses tRNA(Pro) + L-proline + ATP = L-prolyl-tRNA(Pro) + AMP + diphosphate. Functionally, catalyzes the attachment of proline to tRNA(Pro) in a two-step reaction: proline is first activated by ATP to form Pro-AMP and then transferred to the acceptor end of tRNA(Pro). As ProRS can inadvertently accommodate and process non-cognate amino acids such as alanine and cysteine, to avoid such errors it has two additional distinct editing activities against alanine. One activity is designated as 'pretransfer' editing and involves the tRNA(Pro)-independent hydrolysis of activated Ala-AMP. The other activity is designated 'posttransfer' editing and involves deacylation of mischarged Ala-tRNA(Pro). The misacylated Cys-tRNA(Pro) is not edited by ProRS. The chain is Proline--tRNA ligase from Rippkaea orientalis (strain PCC 8801 / RF-1) (Cyanothece sp. (strain PCC 8801)).